The sequence spans 180 residues: Large ribosomal subunit protein uL5 (180 aa).

The protein belongs to the universal ribosomal protein uL5 family. As to quaternary structure, part of the 50S ribosomal subunit; part of the 5S rRNA/L5/L18/L25 subcomplex. Contacts the 5S rRNA and the P site tRNA. Forms a bridge to the 30S subunit in the 70S ribosome.

This is one of the proteins that bind and probably mediate the attachment of the 5S RNA into the large ribosomal subunit, where it forms part of the central protuberance. In the 70S ribosome it contacts protein S13 of the 30S subunit (bridge B1b), connecting the 2 subunits; this bridge is implicated in subunit movement. Contacts the P site tRNA; the 5S rRNA and some of its associated proteins might help stabilize positioning of ribosome-bound tRNAs. This is Large ribosomal subunit protein uL5 from Anaeromyxobacter sp. (strain Fw109-5).